Consider the following 446-residue polypeptide: MSQILTGRQAEELHKSLIAYLSSINASQSVTTLREELQIGDNFTDAACKKYEGFLEKKWISVVRLQKRILDLESKIASLQAELDSAPTITSRANRDPKSWLPGTSPTHTLGSHRGAITCVAFHPVFSSLASGSEDYSIKIWDWELGELERTLKGHTRTVTGLDFGGQKGRTLLASCSNDLTIKLWDPSNDYANIRTLFGHDHSVSSVRFLIPGGNILISASRDTTLRMWDTSTGFCVKTIHTQGDWVRDVFPSFDGKWLVSGGRDQAATIWEVSSGEARASLLGHENYIECCTFAPPSSYGYLATLAGLKKPPSTNSSAEFVATGARDKTVKLWDSRGSLIKTLIGHNNWVRGLVFHPGGKYLFSVGDDKTIRCWDLSQEGKLVKTLEGAHEHFVSCIQWAPDPANLVQSSVAERPEGNKGTEHGTTGFRCVIATGSADSCVRVFM.

In terms of domain architecture, LisH spans 9–41 (QAEELHKSLIAYLSSINASQSVTTLREELQIGD). Residues 60 to 86 (ISVVRLQKRILDLESKIASLQAELDSA) adopt a coiled-coil conformation. 8 WD repeats span residues 112-153 (SHRG…RTLK), 155-195 (HTRT…ANIR), 199-239 (GHDH…CVKT), 242-281 (TQGDWVRDVFPSFDGKWLVSGGRDQAATIWEVSSGEARAS), 284-344 (GHEN…IKTL), 346-385 (GHNNWVRGLVFHPGGKYLFSVGDDKTIRCWDLSQEGKLVK), 390-430 (AHEH…TGFR), and 432-446 (VIATGSADSCVRVFM).

This sequence belongs to the WD repeat LIS1/nudF family. In terms of assembly, self-associates. Interacts with NDL1 and dynein.

It localises to the cytoplasm. The protein resides in the cytoskeleton. Its subcellular location is the spindle pole. Functionally, positively regulates the activity of the minus-end directed microtubule motor protein dynein. May enhance dynein-mediated microtubule sliding by targeting dynein to the microtubule plus end. Required for nuclear migration during vegetative growth as well as development. Required for retrograde early endosome (EE) transport from the hyphal tip. Required for localization of dynein to the mitotic spindle poles. Recruits additional proteins to the dynein complex at SPBs. The chain is Nuclear distribution protein PAC1-1 from Uncinocarpus reesii (strain UAMH 1704).